The chain runs to 382 residues: Type 2 DNA topoisomerase 6 subunit A (382 aa).

A Topo IIA-type catalytic domain is found at 14–155; sequence YDPQKVLKKL…MHITADRRGY (142 aa). Tyrosine 108 acts as the O-(5'-phospho-DNA)-tyrosine intermediate in catalysis. 2 residues coordinate Mg(2+): glutamate 202 and aspartate 254.

Belongs to the TOP6A family. As to quaternary structure, homodimer. Heterotetramer of two Top6A and two Top6B chains. Mg(2+) is required as a cofactor.

It catalyses the reaction ATP-dependent breakage, passage and rejoining of double-stranded DNA.. Relaxes both positive and negative superturns and exhibits a strong decatenase activity. The protein is Type 2 DNA topoisomerase 6 subunit A of Pyrococcus abyssi (strain GE5 / Orsay).